Reading from the N-terminus, the 225-residue chain is Agamous-like MADS-box protein TM6 (225 aa).

The 61-residue stretch at 1 to 61 (MGRGKIEIKR…GKFHEYTSPT (61 aa)) folds into the MADS-box domain. The K-box domain maps to 84 to 174 (YERMQENLRK…LLNFEAKCDD (91 aa)).

As to expression, expressed during flower development in stamens, petals and carpels. Expressed in fruits and seeds.

Its subcellular location is the nucleus. In terms of biological role, probable transcription factor involved in flower development. This chain is Agamous-like MADS-box protein TM6, found in Vitis vinifera (Grape).